Here is a 23-residue protein sequence, read N- to C-terminus: Basic phospholipase A2 homolog CTs-K49c (23 aa).

Contains 7 disulfide bonds. In terms of tissue distribution, expressed by the venom gland.

The protein resides in the secreted. Its function is as follows. Snake venom phospholipase A2 homolog that lacks catalytic activity. Shows myotoxic activities. Induces local edema a few hours after injection (5-10 ug) in the hind paw. This chain is Basic phospholipase A2 homolog CTs-K49c, found in Trimeresurus stejnegeri (Chinese green tree viper).